The following is an 88-amino-acid chain: MSKRTVHNFERAVHLVMEGDPLGCDLIHLYYSKSPSLNAFINYLLCFYCPCKPPLEVCYKSVKYLYDTEKLSPSEYAFLIERLRKWNH.

This is an uncharacterized protein from Acidianus convivator (ABV).